A 267-amino-acid polypeptide reads, in one-letter code: Cilia- and flagella-associated protein 300 (267 aa).

Belongs to the CFAP300 family. As to quaternary structure, interacts with DNAAF2. Expressed in nasal epithelial cells.

It localises to the cytoplasm. The protein resides in the cytoskeleton. The protein localises to the cilium axoneme. Functionally, cilium- and flagellum-specific protein that plays a role in axonemal structure organization and motility. May play a role in outer and inner dynein arm assembly. The chain is Cilia- and flagella-associated protein 300 from Homo sapiens (Human).